Consider the following 298-residue polypeptide: Cell wall protein DAN1 (298 aa).

Positions 1-19 are cleaved as a signal peptide; sequence MSRISILAVAAALVASATA. Positions 122–168 are disordered; it reads PASTTEASSTSTSEASSAATESSSSSESSAETSSNAASTQATVSSES. A lipid anchor (GPI-anchor amidated asparagine) is attached at asparagine 275. A propeptide spans 276-298 (removed in mature form); sequence GANKFNNGVFGAAAIAGAAALLL.

It belongs to the SRP1/TIP1 family. Post-translationally, extensively O-glycosylated. The GPI-anchor is attached to the protein in the endoplasmic reticulum and serves to target the protein to the cell surface. There, the glucosamine-inositol phospholipid moiety is cleaved off and the GPI-modified mannoprotein is covalently attached via its lipidless GPI glycan remnant to the 1,6-beta-glucan of the outer cell wall layer.

Its subcellular location is the secreted. It is found in the cell wall. It localises to the membrane. In terms of biological role, component of the cell wall. This chain is Cell wall protein DAN1 (DAN1), found in Saccharomyces cerevisiae (strain ATCC 204508 / S288c) (Baker's yeast).